A 2896-amino-acid polypeptide reads, in one-letter code: 3'-5' exoribonuclease HELZ2 (2896 aa).

2 consecutive C3H1-type zinc fingers follow at residues Val-90–Glu-114 and Gly-217–Val-246. The C2H2-type; atypical zinc-finger motif lies at Leu-287–His-311. Residues Ser-327 to Gln-357 form a C3H1-type 3 zinc finger. The UvrD-like helicase ATP-binding domain occupies Val-770 to Gln-1126. Residue Gly-791–Thr-798 participates in ATP binding. The tract at residues Arg-810–Ala-1306 is interaction with THRAP3. The short motif at Asp-914–Ala-917 is the DEAA box element. Ser-1253 carries the post-translational modification Phosphoserine. 3 consecutive short sequence motifs (LXXLL motif) follow at residues Leu-1322 to Leu-1326, Leu-1365 to Leu-1369, and Leu-1420 to Leu-1424. The RNB domain maps to Arg-1581–Leu-1938. Residues Leu-2259 to Pro-2263 carry the LXXLL motif 4 motif. Residues Pro-2382–Ser-2896 form an interaction with THRAP3 region. Residues Leu-2400–His-2675 form the UvrD-like helicase ATP-binding 2 domain. ATP is bound at residue Gly-2421–Thr-2428. The LXXLL motif 5 signature appears at Leu-2476–Leu-2480.

The protein belongs to the DNA2/NAM7 helicase family. In terms of assembly, interacts with PPARA (via DNA-binding domain) and PPARG; the interaction stimulates the transcriptional activity of PPARA and PPARG. Interacts with THRAP3; the interaction is direct and HELZ2 and THRAP3 synergistically enhance the transcriptional activity of PPARG. It is probably part of the peroxisome proliferator activated receptor alpha interacting complex (PRIC). In terms of tissue distribution, expressed in various tissues including heart, pancreas, skeletal muscle, colon, spleen, liver, kidney, lung, peripheral blood and placenta.

The protein localises to the cytoplasm. The catalysed reaction is Exonucleolytic cleavage in the 3'- to 5'-direction to yield nucleoside 5'-phosphates.. It carries out the reaction ATP + H2O = ADP + phosphate + H(+). Functionally, can degrade highly structured RNAs through its concerted ATP-dependent RNA helicase and 3' to 5' exoribonuclease activities. Shows a strong preference for pyrimidine over purine residues for its nuclease activity. Acts as a transcriptional coactivator for a number of nuclear receptors including PPARA, PPARG, THRA, THRB and RXRA. The chain is 3'-5' exoribonuclease HELZ2 from Homo sapiens (Human).